A 105-amino-acid chain; its full sequence is Large ribosomal subunit protein uL24 (105 aa).

This sequence belongs to the universal ribosomal protein uL24 family. Part of the 50S ribosomal subunit.

Functionally, one of two assembly initiator proteins, it binds directly to the 5'-end of the 23S rRNA, where it nucleates assembly of the 50S subunit. In terms of biological role, one of the proteins that surrounds the polypeptide exit tunnel on the outside of the subunit. This chain is Large ribosomal subunit protein uL24, found in Novosphingobium aromaticivorans (strain ATCC 700278 / DSM 12444 / CCUG 56034 / CIP 105152 / NBRC 16084 / F199).